The sequence spans 187 residues: Transcriptional regulator VspR (187 aa).

In terms of biological role, represses the transcription of several genes encoded within the Vibrio 7th pandemic island-1 (VSP-1), including dncV, VC_0176, VC_0178 and VC_0180. The chain is Transcriptional regulator VspR (vspR) from Vibrio cholerae serotype O1 (strain ATCC 39315 / El Tor Inaba N16961).